The primary structure comprises 352 residues: Transcription factor MYB86 (352 aa).

2 consecutive HTH myb-type domains span residues Lys9–Leu61 and Arg62–Leu116. 2 consecutive DNA-binding regions (H-T-H motif) follow at residues Trp37–Leu61 and Trp89–Leu112.

In terms of tissue distribution, expressed in stems, flowers and seeds. Weakly expressed in leaves and roots.

The protein localises to the nucleus. In terms of biological role, probable transcription factor. This Arabidopsis thaliana (Mouse-ear cress) protein is Transcription factor MYB86 (MYB86).